Here is a 256-residue protein sequence, read N- to C-terminus: Hydroxyacylglutathione hydrolase (256 aa).

Zn(2+) contacts are provided by histidine 55, histidine 57, aspartate 59, histidine 60, histidine 113, aspartate 130, and histidine 168.

The protein belongs to the metallo-beta-lactamase superfamily. Glyoxalase II family. Monomer. Zn(2+) serves as cofactor.

It catalyses the reaction an S-(2-hydroxyacyl)glutathione + H2O = a 2-hydroxy carboxylate + glutathione + H(+). It participates in secondary metabolite metabolism; methylglyoxal degradation; (R)-lactate from methylglyoxal: step 2/2. Thiolesterase that catalyzes the hydrolysis of S-D-lactoyl-glutathione to form glutathione and D-lactic acid. This is Hydroxyacylglutathione hydrolase from Psychromonas ingrahamii (strain DSM 17664 / CCUG 51855 / 37).